The sequence spans 896 residues: DNA double-strand break repair Rad50 ATPase (896 aa).

ATP-binding positions include 32–38 and Gln137; that span reads NGAGKSS. Coiled-coil stretches lie at residues 200–274, 412–505, 580–611, 636–669, and 702–731; these read RRYQ…KLQE, EEIR…LISM, IGDI…ESEF, IKLA…IQKR, and RSKV…RMKK. One can recognise a Zinc-hook domain in the interval 411–507; sequence YEEIRRDIDE…KKRQLISMES (97 aa). Zn(2+)-binding residues include Cys455 and Cys458.

Belongs to the SMC family. RAD50 subfamily. Homodimer. Forms a heterotetramer composed of two Mre11 subunits and two Rad50 subunits. Zn(2+) is required as a cofactor.

Part of the Rad50/Mre11 complex, which is involved in the early steps of DNA double-strand break (DSB) repair. The complex may facilitate opening of the processed DNA ends to aid in the recruitment of HerA and NurA. Rad50 controls the balance between DNA end bridging and DNA resection via ATP-dependent structural rearrangements of the Rad50/Mre11 complex. This is DNA double-strand break repair Rad50 ATPase from Thermoplasma acidophilum (strain ATCC 25905 / DSM 1728 / JCM 9062 / NBRC 15155 / AMRC-C165).